Reading from the N-terminus, the 160-residue chain is Transcription elongation factor GreA (160 aa).

Residues 43–75 (LSENAEYEAAREQQAQMESKIVDLENKLTRASI) are a coiled coil.

The protein belongs to the GreA/GreB family.

In terms of biological role, necessary for efficient RNA polymerase transcription elongation past template-encoded arresting sites. The arresting sites in DNA have the property of trapping a certain fraction of elongating RNA polymerases that pass through, resulting in locked ternary complexes. Cleavage of the nascent transcript by cleavage factors such as GreA or GreB allows the resumption of elongation from the new 3'terminus. GreA releases sequences of 2 to 3 nucleotides. This is Transcription elongation factor GreA from Prosthecochloris aestuarii (strain DSM 271 / SK 413).